Consider the following 377-residue polypeptide: Queuine tRNA-ribosyltransferase (377 aa).

The active-site Proton acceptor is Asp93. Residues 93 to 97, Asp147, Gln190, and Gly216 contribute to the substrate site; that span reads DSGGF. The RNA binding stretch occupies residues 247–253; sequence GVGTPDD. The active-site Nucleophile is Asp266. The tract at residues 271 to 275 is RNA binding; important for wobble base 34 recognition; the sequence is TRAGR. Zn(2+) is bound by residues Cys304, Cys306, Cys309, and His335.

It belongs to the queuine tRNA-ribosyltransferase family. In terms of assembly, homodimer. Within each dimer, one monomer is responsible for RNA recognition and catalysis, while the other monomer binds to the replacement base PreQ1. Requires Zn(2+) as cofactor.

It catalyses the reaction 7-aminomethyl-7-carbaguanine + guanosine(34) in tRNA = 7-aminomethyl-7-carbaguanosine(34) in tRNA + guanine. Its pathway is tRNA modification; tRNA-queuosine biosynthesis. Catalyzes the base-exchange of a guanine (G) residue with the queuine precursor 7-aminomethyl-7-deazaguanine (PreQ1) at position 34 (anticodon wobble position) in tRNAs with GU(N) anticodons (tRNA-Asp, -Asn, -His and -Tyr). Catalysis occurs through a double-displacement mechanism. The nucleophile active site attacks the C1' of nucleotide 34 to detach the guanine base from the RNA, forming a covalent enzyme-RNA intermediate. The proton acceptor active site deprotonates the incoming PreQ1, allowing a nucleophilic attack on the C1' of the ribose to form the product. After dissociation, two additional enzymatic reactions on the tRNA convert PreQ1 to queuine (Q), resulting in the hypermodified nucleoside queuosine (7-(((4,5-cis-dihydroxy-2-cyclopenten-1-yl)amino)methyl)-7-deazaguanosine). The polypeptide is Queuine tRNA-ribosyltransferase (Granulibacter bethesdensis (strain ATCC BAA-1260 / CGDNIH1)).